A 294-amino-acid polypeptide reads, in one-letter code: Homoserine kinase (294 aa).

84–94 is a binding site for ATP; the sequence is PFSRGLGSSSA.

The protein belongs to the GHMP kinase family. Homoserine kinase subfamily.

It is found in the cytoplasm. It catalyses the reaction L-homoserine + ATP = O-phospho-L-homoserine + ADP + H(+). It participates in amino-acid biosynthesis; L-threonine biosynthesis; L-threonine from L-aspartate: step 4/5. Functionally, catalyzes the ATP-dependent phosphorylation of L-homoserine to L-homoserine phosphate. The protein is Homoserine kinase of Campylobacter concisus (strain 13826).